A 187-amino-acid chain; its full sequence is Elongation factor P (187 aa).

The protein belongs to the elongation factor P family.

Its subcellular location is the cytoplasm. The protein operates within protein biosynthesis; polypeptide chain elongation. In terms of biological role, involved in peptide bond synthesis. Stimulates efficient translation and peptide-bond synthesis on native or reconstituted 70S ribosomes in vitro. Probably functions indirectly by altering the affinity of the ribosome for aminoacyl-tRNA, thus increasing their reactivity as acceptors for peptidyl transferase. The polypeptide is Elongation factor P (Erythrobacter litoralis (strain HTCC2594)).